Reading from the N-terminus, the 419-residue chain is Oxamate carbamoyltransferase subunit AllG (419 aa).

It belongs to the AllG family. As to quaternary structure, the OXTCase is composed of 3 subunits, AllF, AllG and AllH. Mg(2+) serves as cofactor.

It carries out the reaction oxamate + carbamoyl phosphate = N-carbamoyl-2-oxoglycine + phosphate. It functions in the pathway nitrogen metabolism; (S)-allantoin degradation. In terms of biological role, component of a carbamoyltransferase involved in the anaerobic nitrogen utilization via the assimilation of allantoin. Catalyzes the conversion of oxalurate (N-carbamoyl-2-oxoglycine) to oxamate and carbamoyl phosphate. The chain is Oxamate carbamoyltransferase subunit AllG from Escherichia coli (strain K12).